The primary structure comprises 413 residues: Serine hydroxymethyltransferase (413 aa).

Residues leucine 116 and 120-122 (GHL) each bind (6S)-5,6,7,8-tetrahydrofolate. The residue at position 225 (lysine 225) is an N6-(pyridoxal phosphate)lysine. 349 to 351 (SPF) is a binding site for (6S)-5,6,7,8-tetrahydrofolate.

Belongs to the SHMT family. As to quaternary structure, homodimer. Pyridoxal 5'-phosphate is required as a cofactor.

The protein localises to the cytoplasm. It carries out the reaction (6R)-5,10-methylene-5,6,7,8-tetrahydrofolate + glycine + H2O = (6S)-5,6,7,8-tetrahydrofolate + L-serine. It participates in one-carbon metabolism; tetrahydrofolate interconversion. The protein operates within amino-acid biosynthesis; glycine biosynthesis; glycine from L-serine: step 1/1. Catalyzes the reversible interconversion of serine and glycine with tetrahydrofolate (THF) serving as the one-carbon carrier. This reaction serves as the major source of one-carbon groups required for the biosynthesis of purines, thymidylate, methionine, and other important biomolecules. Also exhibits THF-independent aldolase activity toward beta-hydroxyamino acids, producing glycine and aldehydes, via a retro-aldol mechanism. This Levilactobacillus brevis (strain ATCC 367 / BCRC 12310 / CIP 105137 / JCM 1170 / LMG 11437 / NCIMB 947 / NCTC 947) (Lactobacillus brevis) protein is Serine hydroxymethyltransferase.